The following is a 192-amino-acid chain: Secreted and transmembrane protein 1A (192 aa).

Residues 1-27 (MMTCPSVPAIPTLWLFSILLLVVSLNA) form the signal peptide. Over 28–165 (QNKSWDNPIC…SSPIEGKPGT (138 aa)) the chain is Extracellular. N-linked (GlcNAc...) asparagine glycans are attached at residues Asn-29, Asn-55, Asn-84, and Asn-127. Residues 166–186 (LVGVITVIFILGVAGFITFIY) traverse the membrane as a helical segment. Residues 187-192 (YRHRRS) are Cytoplasmic-facing.

This sequence belongs to the SECTM family.

The protein resides in the cell membrane. Its subcellular location is the secreted. In Mus musculus (Mouse), this protein is Secreted and transmembrane protein 1A.